A 176-amino-acid polypeptide reads, in one-letter code: Large ribosomal subunit protein uL6 (176 aa).

This sequence belongs to the universal ribosomal protein uL6 family. In terms of assembly, part of the 50S ribosomal subunit.

Functionally, this protein binds to the 23S rRNA, and is important in its secondary structure. It is located near the subunit interface in the base of the L7/L12 stalk, and near the tRNA binding site of the peptidyltransferase center. The sequence is that of Large ribosomal subunit protein uL6 from Burkholderia ambifaria (strain MC40-6).